The chain runs to 261 residues: Type III pantothenate kinase (261 aa).

6-13 (DVGNTNTV) contacts ATP. A substrate-binding site is contributed by 107–110 (GADR). Asp109 acts as the Proton acceptor in catalysis. Residue Asp129 participates in K(+) binding. Thr132 provides a ligand contact to ATP. A substrate-binding site is contributed by Thr183.

The protein belongs to the type III pantothenate kinase family. Homodimer. NH4(+) is required as a cofactor. K(+) serves as cofactor.

The protein resides in the cytoplasm. The enzyme catalyses (R)-pantothenate + ATP = (R)-4'-phosphopantothenate + ADP + H(+). It participates in cofactor biosynthesis; coenzyme A biosynthesis; CoA from (R)-pantothenate: step 1/5. Functionally, catalyzes the phosphorylation of pantothenate (Pan), the first step in CoA biosynthesis. The sequence is that of Type III pantothenate kinase from Kosmotoga olearia (strain ATCC BAA-1733 / DSM 21960 / TBF 19.5.1).